The primary structure comprises 303 residues: Y-box-binding protein 1 (303 aa).

Residues 1–12 show a composition bias toward polar residues; sequence MSSEVETQQQQP. The tract at residues 1–28 is disordered; it reads MSSEVETQQQQPDALEGKAGQEPAATVG. The CSD domain occupies 39-103; that stretch reads GTVKWFNVRN…GEKGAEAANV (65 aa). The C5-methylcytosine binding stretch occupies residues 43 to 48; that stretch reads WFNVRN. The disordered stretch occupies residues 98–303; it reads AEAANVTGPE…TPEAEQGGAE (206 aa). Over residues 122 to 132 the composition is skewed to basic residues; that stretch reads HYRRYPRRRGP. Composition is skewed to low complexity over residues 133–143 and 173–187; these read PRNYQQNYQNN and PPYYSRRPYGRRPQY. Composition is skewed to basic residues over residues 220–229 and 258–270; these read FRPRFRRGPP and RRYRRNFNYRRRR. Positions 271–284 are enriched in basic and acidic residues; sequence PENPKSQDGKETKA.

This sequence belongs to the YBX1 family.

It localises to the cytoplasm. The protein localises to the nucleus. The protein resides in the cytoplasmic granule. It is found in the secreted. Its subcellular location is the extracellular exosome. It localises to the P-body. In terms of biological role, DNA- and RNA-binding protein involved in various processes, such as translational repression, RNA stabilization, mRNA splicing and transcription regulation. Binds preferentially to the 5'-[CU]CUGCG-3' RNA motif and specifically recognizes mRNA transcripts modified by C5-methylcytosine (m5C). Promotes mRNA stabilization: acts by binding to m5C-containing mRNAs and preventing mRNA decay. Plays a role in the maternal-to-zygotic transition in early embryo by binding to m5C-containing maternal mRNAs and preventing their degradation. Also promotes maternal-to-zygotic transition in oocytes and embryos by promoting translation repression; molecular mechanisms governing translation repression are unknown. Plays a key role in RNA composition of extracellular exosomes by defining the sorting of small non-coding RNAs, such as tRNAs, Y RNAs, Vault RNAs and miRNAs. Probably sorts RNAs in exosomes by recognizing and binding C5-methylcytosine (m5C)-containing RNAs. Acts as a key effector of epidermal progenitors by preventing epidermal progenitor senescence: acts by regulating the translation of a senescence-associated subset of cytokine mRNAs, possibly by binding to m5C-containing mRNAs. Also involved in pre-mRNA alternative splicing regulation: binds to splice sites in pre-mRNA and regulates splice site selection. Also able to bind DNA and regulate transcription. Binds to promoters that contain a Y-box (5'-CTGATTGGCCAA-3'). Promotes separation of DNA strands that contain mismatches or are modified by cisplatin. Has endonucleolytic activity and can introduce nicks or breaks into double-stranded DNA, suggesting a role in DNA repair. The secreted form acts as an extracellular mitogen and stimulates cell migration and proliferation. The protein is Y-box-binding protein 1 of Xenopus laevis (African clawed frog).